The sequence spans 117 residues: uncharacterized protein (117 aa).

2 helical membrane-spanning segments follow: residues 9-29 (ITSH…FIPF) and 56-76 (VIIV…FFIP).

It localises to the membrane. This is an uncharacterized protein from Saccharomyces cerevisiae (strain ATCC 204508 / S288c) (Baker's yeast).